The sequence spans 573 residues: WRKY transcription factor SUSIBA2 (573 aa).

2 disordered regions span residues 56–133 (AHPD…CSRE) and 157–192 (PAEV…DDGY). Basic and acidic residues predominate over residues 64–85 (PRDKSVRNAHEDRGSRDFEFKP). The span at 108–122 (MQNQSMNPSSSSSNM) shows a compositional bias: low complexity. A compositionally biased stretch (polar residues) spans 163–182 (SEPQQMNSSDNAMQEPQSEN). Positions 183-192 (VADKSADDGY) are enriched in basic and acidic residues. A DNA-binding region (WRKY 1) is located at residues 183–247 (VADKSADDGY…YKGRHNHPKP (65 aa)). Positions 214, 219, 242, and 244 each coordinate Zn(2+). Residues 240 to 332 (GRHNHPKPQP…EDLESKRRKM (93 aa)) are disordered. A compositionally biased stretch (basic and acidic residues) spans 263–277 (GEERYDGASAADDKS). The WRKY 2 DNA-binding region spans 357 to 422 (SEVDILDDGY…YEGKHNHEVP (66 aa)). The Zn(2+) site is built by Cys-388, Cys-393, His-417, and His-419.

It belongs to the WRKY group I family. As to expression, expressed in endosperm, but not in leaves.

It localises to the nucleus. In terms of biological role, transcription factor involved in starch synthesis. Acts as a transcriptional activator in sugar signaling. Interacts specifically with the SURE and W-box elements, but not with the SP8a element. The chain is WRKY transcription factor SUSIBA2 from Hordeum vulgare (Barley).